Here is a 113-residue protein sequence, read N- to C-terminus: Small ribosomal subunit protein bS6 (113 aa).

This sequence belongs to the bacterial ribosomal protein bS6 family.

Functionally, binds together with bS18 to 16S ribosomal RNA. In Flavobacterium psychrophilum (strain ATCC 49511 / DSM 21280 / CIP 103535 / JIP02/86), this protein is Small ribosomal subunit protein bS6.